Consider the following 545-residue polypeptide: CTP synthase (545 aa).

An amidoligase domain region spans residues 1 to 266; that stretch reads MTTNYIFVTG…DDYICKRFSL (266 aa). Residue Ser-14 participates in CTP binding. Ser-14 is a binding site for UTP. Residues 15–20 and Asp-72 contribute to the ATP site; that span reads SLGKGI. Asp-72 and Glu-140 together coordinate Mg(2+). CTP contacts are provided by residues 147–149, 187–192, and Lys-223; these read DIE and KTKPTQ. Residues 187–192 and Lys-223 contribute to the UTP site; that span reads KTKPTQ. 239 to 241 contributes to the ATP binding site; that stretch reads KDV. Residues 291–542 form the Glutamine amidotransferase type-1 domain; sequence TIGMVGKYIE…VKAASEFQKR (252 aa). Residue Gly-352 coordinates L-glutamine. Cys-379 (nucleophile; for glutamine hydrolysis) is an active-site residue. Residues 380-383, Glu-403, and Arg-470 contribute to the L-glutamine site; that span reads LGMQ. Catalysis depends on residues His-515 and Glu-517.

The protein belongs to the CTP synthase family. In terms of assembly, homotetramer.

The enzyme catalyses UTP + L-glutamine + ATP + H2O = CTP + L-glutamate + ADP + phosphate + 2 H(+). It catalyses the reaction L-glutamine + H2O = L-glutamate + NH4(+). The catalysed reaction is UTP + NH4(+) + ATP = CTP + ADP + phosphate + 2 H(+). The protein operates within pyrimidine metabolism; CTP biosynthesis via de novo pathway; CTP from UDP: step 2/2. With respect to regulation, allosterically activated by GTP, when glutamine is the substrate; GTP has no effect on the reaction when ammonia is the substrate. The allosteric effector GTP functions by stabilizing the protein conformation that binds the tetrahedral intermediate(s) formed during glutamine hydrolysis. Inhibited by the product CTP, via allosteric rather than competitive inhibition. Catalyzes the ATP-dependent amination of UTP to CTP with either L-glutamine or ammonia as the source of nitrogen. Regulates intracellular CTP levels through interactions with the four ribonucleotide triphosphates. The protein is CTP synthase of Escherichia coli O127:H6 (strain E2348/69 / EPEC).